Consider the following 247-residue polypeptide: Adenosine 5'-phosphosulfate reductase (247 aa).

4 residues coordinate [4Fe-4S] cluster: C133, C134, C216, and C219. Positions 222 to 247 (KPAPGSDPRSGRWAGASKTECGLHAS) are disordered. Residue C242 is the Nucleophile; cysteine thiosulfonate intermediate of the active site.

This sequence belongs to the PAPS reductase family. CysH subfamily. Requires [4Fe-4S] cluster as cofactor.

It is found in the cytoplasm. The catalysed reaction is [thioredoxin]-disulfide + sulfite + AMP + 2 H(+) = adenosine 5'-phosphosulfate + [thioredoxin]-dithiol. It participates in sulfur metabolism; hydrogen sulfide biosynthesis; sulfite from sulfate. Its function is as follows. Catalyzes the formation of sulfite from adenosine 5'-phosphosulfate (APS) using thioredoxin as an electron donor. This Rhodococcus erythropolis (strain PR4 / NBRC 100887) protein is Adenosine 5'-phosphosulfate reductase.